A 247-amino-acid chain; its full sequence is DNA-directed RNA polymerase subunit Rpo3 (247 aa).

Belongs to the archaeal Rpo3/eukaryotic RPB3 RNA polymerase subunit family. As to quaternary structure, part of the RNA polymerase complex.

It localises to the cytoplasm. It carries out the reaction RNA(n) + a ribonucleoside 5'-triphosphate = RNA(n+1) + diphosphate. Its function is as follows. DNA-dependent RNA polymerase (RNAP) catalyzes the transcription of DNA into RNA using the four ribonucleoside triphosphates as substrates. The sequence is that of DNA-directed RNA polymerase subunit Rpo3 from Natronomonas pharaonis (strain ATCC 35678 / DSM 2160 / CIP 103997 / JCM 8858 / NBRC 14720 / NCIMB 2260 / Gabara) (Halobacterium pharaonis).